The chain runs to 396 residues: Calcium-binding and spermatid-specific protein 1 (396 aa).

Residues 1 to 21 (MAEDGLPKIYSHPPTESSKTP) form a disordered region. Residue Ser274 is modified to Phosphoserine. The tract at residues 276-296 (EKDKDNQEDTLLTDEESPEGA) is disordered. Residues 283-293 (EDTLLTDEESP) show a composition bias toward acidic residues. Thr288 bears the Phosphothreonine; by CK2 mark. Residues Ser320 and Ser377 each carry the phosphoserine modification. A disordered region spans residues 336–396 (EDSSTEEELS…LKEEPDEFMI (61 aa)).

The protein resides in the cytoplasm. Its subcellular location is the mitochondrion inner membrane. It localises to the cell projection. The protein localises to the cilium. It is found in the flagellum. The protein resides in the cytoplasmic vesicle. Its subcellular location is the secretory vesicle. It localises to the acrosome. Functionally, calcium-binding protein. Essential for maintaining the structural integrity of the sperm flagella. The chain is Calcium-binding and spermatid-specific protein 1 (CABS1) from Macaca fascicularis (Crab-eating macaque).